The chain runs to 837 residues: Translation initiation factor IF-2 (837 aa).

Disordered regions lie at residues 1–44 and 62–251; these read MTEK…VRKS and KAQE…TKPA. Basic and acidic residues-rich tracts occupy residues 62 to 102 and 111 to 165; these read KAQE…EAKP and ADPE…HNDS. Residues 189–205 are compositionally biased toward basic residues; that stretch reads RENHIRTGKNKVTKAKK. Residues 206–229 are compositionally biased toward basic and acidic residues; it reads GGRDDNGSKDERSADRRNQKDMRG. Residues 242 to 251 show a composition bias toward polar residues; it reads TLQQAFTKPA. The region spanning 337-506 is the tr-type G domain; the sequence is QRAPVVTIMG…LLQSEVLELT (170 aa). The interval 346–353 is G1; that stretch reads GHVDHGKT. 346–353 provides a ligand contact to GTP; the sequence is GHVDHGKT. The interval 371–375 is G2; sequence GITQH. The interval 392–395 is G3; the sequence is DTPG. GTP-binding positions include 392–396 and 446–449; these read DTPGH and NKID. Positions 446–449 are G4; it reads NKID. The segment at 482–484 is G5; that stretch reads SAK.

The protein belongs to the TRAFAC class translation factor GTPase superfamily. Classic translation factor GTPase family. IF-2 subfamily.

It localises to the cytoplasm. Functionally, one of the essential components for the initiation of protein synthesis. Protects formylmethionyl-tRNA from spontaneous hydrolysis and promotes its binding to the 30S ribosomal subunits. Also involved in the hydrolysis of GTP during the formation of the 70S ribosomal complex. The polypeptide is Translation initiation factor IF-2 (Actinobacillus succinogenes (strain ATCC 55618 / DSM 22257 / CCUG 43843 / 130Z)).